We begin with the raw amino-acid sequence, 995 residues long: DNA polymerase (995 aa).

It belongs to the DNA polymerase type-B family.

It carries out the reaction DNA(n) + a 2'-deoxyribonucleoside 5'-triphosphate = DNA(n+1) + diphosphate. This Kluyveromyces lactis (strain ATCC 8585 / CBS 2359 / DSM 70799 / NBRC 1267 / NRRL Y-1140 / WM37) (Yeast) protein is DNA polymerase (RF1).